The primary structure comprises 104 residues: L-rhamnose mutarotase (104 aa).

A substrate-binding site is contributed by tyrosine 18. Histidine 22 functions as the Proton donor in the catalytic mechanism. Residues tyrosine 41 and 76 to 77 contribute to the substrate site; that span reads WW.

Belongs to the rhamnose mutarotase family. Homodimer.

It is found in the cytoplasm. It catalyses the reaction alpha-L-rhamnose = beta-L-rhamnose. Its pathway is carbohydrate metabolism; L-rhamnose metabolism. Functionally, involved in the anomeric conversion of L-rhamnose. This is L-rhamnose mutarotase from Pectobacterium carotovorum subsp. carotovorum (strain PC1).